The primary structure comprises 833 residues: cGMP-specific 3',5'-cyclic phosphodiesterase (833 aa).

Residue S60 is modified to Phosphoserine. Residues 82 to 101 (FLSDSGKKEQMPLTSPRFDS) form a disordered region. 2 consecutive GAF domains span residues 122–272 (DVTA…GIVL) and 304–461 (SLEV…GLGI). A PDEase domain is found at 494-818 (ETRELQALAA…QKWQALADQQ (325 aa)). H571 (proton donor) is an active-site residue. Positions 575, 611, 612, and 722 each coordinate Zn(2+). D612 is a Mg(2+) binding site. Residue Q775 coordinates 3',5'-cyclic GMP.

This sequence belongs to the cyclic nucleotide phosphodiesterase family. Requires Zn(2+) as cofactor. Mg(2+) serves as cofactor. Phosphorylation is regulated by binding of cGMP to the two allosteric sites. Phosphorylation by PRKG1 leads to its activation.

The catalysed reaction is 3',5'-cyclic GMP + H2O = GMP + H(+). It participates in purine metabolism; 3',5'-cyclic GMP degradation; GMP from 3',5'-cyclic GMP: step 1/1. Its function is as follows. Plays a role in signal transduction by regulating the intracellular concentration of cyclic nucleotides. This phosphodiesterase catalyzes the specific hydrolysis of cGMP to 5'-GMP. Specifically regulates nitric-oxide-generated cGMP. This chain is cGMP-specific 3',5'-cyclic phosphodiesterase (Pde5a), found in Rattus norvegicus (Rat).